Here is a 272-residue protein sequence, read N- to C-terminus: Low-density lipoprotein receptor class A domain-containing protein 2 (272 aa).

The signal sequence occupies residues 1–25; the sequence is MEACCLLQLPQRLLLLGAAALTATA. The Extracellular segment spans residues 26 to 233; the sequence is LETADLAELC…GSTDAHTSRS (208 aa). Residue asparagine 97 is glycosylated (N-linked (GlcNAc...) asparagine). In terms of domain architecture, LDL-receptor class A spans 172–214; that stretch reads PCGAYFRCQNGRCIPSSLVCDPWGMDNCGDGSDQGSWSPADCR. 3 cysteine pairs are disulfide-bonded: cysteine 173–cysteine 184, cysteine 179–cysteine 199, and cysteine 191–cysteine 213. Residues 202 to 272 are disordered; the sequence is GSDQGSWSPA…QDAALEGSTE (71 aa). Over residues 220–236 the composition is skewed to polar residues; the sequence is PSQTGSTDAHTSRSLTP. A helical transmembrane segment spans residues 234-250; that stretch reads LTPSPALGSAGSLWIAA. The Cytoplasmic portion of the chain corresponds to 251-272; sequence ERSSPAGRDPTRQDAALEGSTE.

The protein belongs to the LDLR family.

The protein resides in the membrane. This is Low-density lipoprotein receptor class A domain-containing protein 2 (LDLRAD2) from Homo sapiens (Human).